The primary structure comprises 77 residues: Acyl carrier protein (77 aa).

A Carrier domain is found at 2 to 77 (SDVAERVKKI…DAIDFITANS (76 aa)). O-(pantetheine 4'-phosphoryl)serine is present on serine 37.

This sequence belongs to the acyl carrier protein (ACP) family. In terms of processing, 4'-phosphopantetheine is transferred from CoA to a specific serine of apo-ACP by AcpS. This modification is essential for activity because fatty acids are bound in thioester linkage to the sulfhydryl of the prosthetic group.

It localises to the cytoplasm. Its pathway is lipid metabolism; fatty acid biosynthesis. In terms of biological role, carrier of the growing fatty acid chain in fatty acid biosynthesis. The polypeptide is Acyl carrier protein (Paramagnetospirillum magneticum (strain ATCC 700264 / AMB-1) (Magnetospirillum magneticum)).